The chain runs to 377 residues: MLISARRLRRCQFLQLLASCFVLSLMALLVQEDNSLISHVKSYSYRYLINSYDFVNVSLSIPRDRLDGAASYRYLLNNRHICLNEDVLLLLFVKTAPENRRRRDAIRNTWGNEDFIRSQYDANIKVVFALGAEGDPVKSREIQQDLVNENKRFKDLIQQDFSDTFHNLTLKLLLQFGWVNSFCPSAKFIMSADDDIFVHTPNLVSYLKSLPIETQDFWIGRVHRGSPPIRRKTSKYYVPYEMYPWSSYPDYTAGAAYVVSRDVAAKVYEASQTLNTSLYIDDVFMGICANKMGLVPQYHVFFSGEGKSPYHPCIYNKMMTSHGHLDDLDYLWRQAIDPNVKSISSGFWGNLYCRFVNIMLLCRISYVDTYPCSAAWS.

At 1–12 (MLISARRLRRCQ) the chain is on the cytoplasmic side. A helical; Signal-anchor for type II membrane protein transmembrane segment spans residues 13–30 (FLQLLASCFVLSLMALLV). Residues 31–377 (QEDNSLISHV…DTYPCSAAWS (347 aa)) are Lumenal-facing. 3 N-linked (GlcNAc...) asparagine glycosylation sites follow: Asn56, Asn167, and Asn275.

The protein belongs to the glycosyltransferase 31 family.

The protein resides in the golgi apparatus membrane. The enzyme catalyses a beta-D-Gal-(1-&gt;4)-beta-D-Glc-(1&lt;-&gt;1)-Cer(d18:1(4E)) + UDP-N-acetyl-alpha-D-glucosamine = a beta-D-GlcNAc-(1-&gt;3)-beta-D-Gal-(1-&gt;4)-beta-D-Glc-(1&lt;-&gt;1)-Cer(d18:1(4E)) + UDP + H(+). The catalysed reaction is a neolactoside nLc4Cer(d18:1(4E)) + UDP-N-acetyl-alpha-D-glucosamine = a neolactoside IV(3)-beta-GlcNAc-nLc4Cer(d18:1(4E)) + UDP + H(+). It participates in protein modification; protein glycosylation. Functionally, beta-1,3-N-acetylglucosaminyltransferase that plays a key role in the synthesis of lacto- or neolacto-series carbohydrate chains on glycolipids. The polypeptide is Lactosylceramide 1,3-N-acetyl-beta-D-glucosaminyltransferase A (b3gnt5-a) (Xenopus laevis (African clawed frog)).